A 548-amino-acid chain; its full sequence is Chaperonin GroEL (548 aa).

ATP-binding positions include 30–33, Lys-51, 87–91, Gly-415, and 479–481; these read TLGP, DGTTT, and NAV.

Belongs to the chaperonin (HSP60) family. Forms a cylinder of 14 subunits composed of two heptameric rings stacked back-to-back. Interacts with the co-chaperonin GroES.

It localises to the cytoplasm. It catalyses the reaction ATP + H2O + a folded polypeptide = ADP + phosphate + an unfolded polypeptide.. Together with its co-chaperonin GroES, plays an essential role in assisting protein folding. The GroEL-GroES system forms a nano-cage that allows encapsulation of the non-native substrate proteins and provides a physical environment optimized to promote and accelerate protein folding. The polypeptide is Chaperonin GroEL (Stenotrophomonas maltophilia (Pseudomonas maltophilia)).